The following is a 448-amino-acid chain: Biotin carboxylase (448 aa).

The Biotin carboxylation domain occupies 1–445 (MLEKVVIANR…NIHYLEKKLG (445 aa)). ATP is bound by residues lysine 116, lysine 159, 165-166 (GG), 201-204 (EKYL), histidine 209, and histidine 236. Residues 120-317 (IKAMKKAGVP…LVKEQLRIAA (198 aa)) enclose the ATP-grasp domain. Lysine 238 lines the hydrogencarbonate pocket. ATP contacts are provided by glutamate 276 and glutamate 288. Mg(2+) contacts are provided by glutamate 276, glutamate 288, and asparagine 290. Mn(2+) is bound by residues glutamate 276, glutamate 288, and asparagine 290. 3 residues coordinate hydrogencarbonate: arginine 292, valine 295, and arginine 338. Residue arginine 292 is part of the active site. Arginine 338 serves as a coordination point for biotin.

As to quaternary structure, acetyl-CoA carboxylase is a heterohexamer of biotin carboxyl carrier protein, biotin carboxylase and the two subunits of carboxyl transferase in a 2:2 complex. Mg(2+) serves as cofactor. The cofactor is Mn(2+).

It carries out the reaction N(6)-biotinyl-L-lysyl-[protein] + hydrogencarbonate + ATP = N(6)-carboxybiotinyl-L-lysyl-[protein] + ADP + phosphate + H(+). It participates in lipid metabolism; malonyl-CoA biosynthesis; malonyl-CoA from acetyl-CoA: step 1/1. In terms of biological role, this protein is a component of the acetyl coenzyme A carboxylase complex; first, biotin carboxylase catalyzes the carboxylation of the carrier protein and then the transcarboxylase transfers the carboxyl group to form malonyl-CoA. The chain is Biotin carboxylase (accC) from Haemophilus influenzae (strain ATCC 51907 / DSM 11121 / KW20 / Rd).